We begin with the raw amino-acid sequence, 284 residues long: 2-dehydro-3-deoxyphosphooctonate aldolase (284 aa).

The protein belongs to the KdsA family.

Its subcellular location is the cytoplasm. The enzyme catalyses D-arabinose 5-phosphate + phosphoenolpyruvate + H2O = 3-deoxy-alpha-D-manno-2-octulosonate-8-phosphate + phosphate. The protein operates within carbohydrate biosynthesis; 3-deoxy-D-manno-octulosonate biosynthesis; 3-deoxy-D-manno-octulosonate from D-ribulose 5-phosphate: step 2/3. Its pathway is bacterial outer membrane biogenesis; lipopolysaccharide biosynthesis. In Escherichia fergusonii (strain ATCC 35469 / DSM 13698 / CCUG 18766 / IAM 14443 / JCM 21226 / LMG 7866 / NBRC 102419 / NCTC 12128 / CDC 0568-73), this protein is 2-dehydro-3-deoxyphosphooctonate aldolase.